A 791-amino-acid chain; its full sequence is Transient receptor potential cation channel subfamily V member 3 (791 aa).

Disordered stretches follow at residues 1–37 (MNAH…LTPT), 52–71 (PNPT…MDSN), and 76–113 (LSGN…EEQR). At 1 to 430 (MNAHSKEMAP…TLEPLHTLLH (430 aa)) the chain is on the cytoplasmic side. The segment covering 95-105 (ETPSNPNSPSA) has biased composition (polar residues). ANK repeat units follow at residues 117 to 148 (KRLK…LCRR), 170 to 198 (TCLM…EEND), 214 to 243 (EGQT…DVNA), 261 to 291 (FGET…DITS), 298 to 330 (NILH…RSGN), 340 to 362 (DGLT…YILS), and 398 to 420 (TTDN…HEML). The helical transmembrane segment at 431 to 460 (TKWKKFAKYMFFLSFCFYFFYNITLTLVSY) threads the bilayer. The Extracellular segment spans residues 461-479 (YRPREDEDLPHPLALTHKM). A helical transmembrane segment spans residues 480-508 (SWLQLLGRMFVLIWATCISVKEGIAIFLL). Residues 509-519 (RPSDLQSILSD) are Cytoplasmic-facing. Residues 520 to 540 (AWFHFVFFVQAVLVILSVFLY) traverse the membrane as a helical segment. Residues 541–545 (LFAYK) lie on the Extracellular side of the membrane. A helical membrane pass occupies residues 546 to 566 (EYLACLVLAMALGWANMLYYT). The Cytoplasmic portion of the chain corresponds to 567–569 (RGF). A helical transmembrane segment spans residues 570 to 608 (QSMGMYSVMIQKVILHDVLKFLFVYILFLLGFGVALASL). At 609–620 (IEKCSKDKKDCS) the chain is on the extracellular side. An intramembrane region (pore-forming) is located at residues 621–646 (SYGSFSDAVLELFKLTIGLGDLNIQQ). Na(+) is bound at residue G638. Residues 647 to 649 (NST) are Extracellular-facing. The helical transmembrane segment at 650–686 (YPILFLFLLITYVILTFVLLLNMLIALMGETVENVSK) threads the bilayer. At 687-791 (ESERIWRLQR…ELDEFPETSV (105 aa)) the chain is on the cytoplasmic side.

Belongs to the transient receptor (TC 1.A.4) family. TrpV subfamily. TRPV3 sub-subfamily. As to quaternary structure, homotetramer. May convert from a homotetramer to a homopentamer to allow pore dilation. Interacts with TRPV1; may form a heteromeric channel with TRPV1. Interacts with SNX11; this interaction promotes TRPV3 trafficking from the cell membrane to lysosome for degradation. In terms of tissue distribution, expressed in keratinocytes and hair follicles.

It localises to the cell membrane. The protein localises to the cytoplasm. It is found in the lysosome. It catalyses the reaction Ca(2+)(in) = Ca(2+)(out). The enzyme catalyses Mg(2+)(in) = Mg(2+)(out). It carries out the reaction Na(+)(in) = Na(+)(out). The catalysed reaction is K(+)(in) = K(+)(out). With respect to regulation, activated by cannabinoid that binds to the vanilloid binding pocket. Diphenylboronic anhydride induces pore dilation and enhances cation permeability by promoting the conversion to a homopentamer. Functionally, non-selective calcium permeant cation channel. It is activated by innocuous (warm) temperatures and shows an increased response at noxious temperatures greater than 39 degrees Celsius. Activation exhibits an outward rectification. The channel pore can dilate to provide permeability to larger cations. May associate with TRPV1 and may modulate its activity. Is a negative regulator of hair growth and cycling: TRPV3-coupled signaling suppresses keratinocyte proliferation in hair follicles and induces apoptosis and premature hair follicle regression (catagen). This is Transient receptor potential cation channel subfamily V member 3 (Trpv3) from Mus musculus (Mouse).